Consider the following 214-residue polypeptide: ATP phosphoribosyltransferase (214 aa).

Belongs to the ATP phosphoribosyltransferase family. Short subfamily. In terms of assembly, heteromultimer composed of HisG and HisZ subunits.

The protein resides in the cytoplasm. The catalysed reaction is 1-(5-phospho-beta-D-ribosyl)-ATP + diphosphate = 5-phospho-alpha-D-ribose 1-diphosphate + ATP. Its pathway is amino-acid biosynthesis; L-histidine biosynthesis; L-histidine from 5-phospho-alpha-D-ribose 1-diphosphate: step 1/9. Functionally, catalyzes the condensation of ATP and 5-phosphoribose 1-diphosphate to form N'-(5'-phosphoribosyl)-ATP (PR-ATP). Has a crucial role in the pathway because the rate of histidine biosynthesis seems to be controlled primarily by regulation of HisG enzymatic activity. The chain is ATP phosphoribosyltransferase from Streptococcus sanguinis (strain SK36).